A 293-amino-acid polypeptide reads, in one-letter code: Protease HtpX homolog (293 aa).

2 helical membrane-spanning segments follow: residues Ile-4–Val-24 and Ser-40–Ser-60. His-146 lines the Zn(2+) pocket. Glu-147 is a catalytic residue. His-150 is a Zn(2+) binding site. Helical transmembrane passes span Leu-161–Ile-181 and Phe-197–Trp-217. Glu-223 is a Zn(2+) binding site.

Belongs to the peptidase M48B family. Requires Zn(2+) as cofactor.

Its subcellular location is the cell inner membrane. This is Protease HtpX homolog from Bordetella petrii (strain ATCC BAA-461 / DSM 12804 / CCUG 43448).